The following is a 167-amino-acid chain: 2-amino-4-hydroxy-6-hydroxymethyldihydropteridine pyrophosphokinase (167 aa).

This sequence belongs to the HPPK family.

The catalysed reaction is 6-hydroxymethyl-7,8-dihydropterin + ATP = (7,8-dihydropterin-6-yl)methyl diphosphate + AMP + H(+). It participates in cofactor biosynthesis; tetrahydrofolate biosynthesis; 2-amino-4-hydroxy-6-hydroxymethyl-7,8-dihydropteridine diphosphate from 7,8-dihydroneopterin triphosphate: step 4/4. Functionally, catalyzes the transfer of pyrophosphate from adenosine triphosphate (ATP) to 6-hydroxymethyl-7,8-dihydropterin, an enzymatic step in folate biosynthesis pathway. This chain is 2-amino-4-hydroxy-6-hydroxymethyldihydropteridine pyrophosphokinase (folK), found in Bacillus subtilis (strain 168).